Reading from the N-terminus, the 1183-residue chain is Translation initiation factor IF-2 (1183 aa).

2 disordered regions span residues 55–512 (KSKT…KVHI) and 538–574 (ASLA…RQRR). Positions 83-99 (TQKDQKTEPKKKNHDQT) are enriched in basic and acidic residues. Composition is skewed to polar residues over residues 100-143 (ELSQ…QITA) and 165-177 (KPLT…IPQS). The span at 220–229 (PKIDIQDKKP) shows a compositional bias: basic and acidic residues. Residues 231 to 252 (QPNNQKAKTRINQGEISPQKVG) show a composition bias toward polar residues. Low complexity predominate over residues 253 to 267 (QGNIQKIKSQNKQNQ). Residues 288–304 (IRREKPVNKPHTNEVRN) are compositionally biased toward basic and acidic residues. Polar residues-rich tracts occupy residues 324 to 349 (QGLS…NRQG) and 357 to 367 (NRTTQGQNRPG). Positions 485–499 (GRPDWDDSAKLDALR) are enriched in basic and acidic residues. Composition is skewed to basic residues over residues 544–553 (SKPKVGKRNN) and 560–574 (LKKR…RQRR). The 173-residue stretch at 675-847 (RRPPVVTVMG…VLLVTEVEDL (173 aa)) folds into the tr-type G domain. The G1 stretch occupies residues 684-691 (GHVDHGKT). 684–691 (GHVDHGKT) provides a ligand contact to GTP. A G2 region spans residues 709–713 (GITQH). The G3 stretch occupies residues 734 to 737 (DTPG). Residues 734-738 (DTPGH) and 788-791 (NKID) each bind GTP. Residues 788–791 (NKID) form a G4 region. A G5 region spans residues 824–826 (SAI).

This sequence belongs to the TRAFAC class translation factor GTPase superfamily. Classic translation factor GTPase family. IF-2 subfamily.

The protein resides in the cytoplasm. In terms of biological role, one of the essential components for the initiation of protein synthesis. Protects formylmethionyl-tRNA from spontaneous hydrolysis and promotes its binding to the 30S ribosomal subunits. Also involved in the hydrolysis of GTP during the formation of the 70S ribosomal complex. The polypeptide is Translation initiation factor IF-2 (Prochlorococcus marinus (strain NATL1A)).